The sequence spans 182 residues: Peptidyl-prolyl cis-trans isomerase H (182 aa).

Residues Phe-15–Glu-181 form the PPIase cyclophilin-type domain.

Belongs to the cyclophilin-type PPIase family. PPIase H subfamily.

It is found in the nucleus. It carries out the reaction [protein]-peptidylproline (omega=180) = [protein]-peptidylproline (omega=0). Its function is as follows. PPIases accelerate the folding of proteins. It catalyzes the cis-trans isomerization of proline imidic peptide bonds in oligopeptides. This chain is Peptidyl-prolyl cis-trans isomerase H (cyp-3), found in Neurospora crassa (strain ATCC 24698 / 74-OR23-1A / CBS 708.71 / DSM 1257 / FGSC 987).